Here is a 285-residue protein sequence, read N- to C-terminus: MKIDGHTRLAAVIAKPIKHSISPFIHNMAYDLTDTNAVYLAFEVDRENLEQAVENIRLHQMLGANISMPYKQEVITYLDELDESALLIGAVNTVVNQNDRLIGYNTDGLGFFRSLSNFHIKGKNLTILGAGGAASAIIGQAMLDGVEKVCVFDLRDRLAGHQERMGQMSQRLGHPIQLLAVEDLAALSDAVNQSDLFINATGLGMDGKSLPIPSDFTFPKGLLVADMTYCPAETPFLRLAREQGLQTVNGLGMLLYQAEKAFELMTGKKMPSEEIKKALIEKLEI.

Shikimate is bound by residues 20–22 (SIS) and Ser67. Catalysis depends on Lys71, which acts as the Proton acceptor. Residue Glu83 participates in NADP(+) binding. Asn92 and Asp107 together coordinate shikimate. Residues 129–133 (GAGGA) and Met227 contribute to the NADP(+) site. Tyr229 contributes to the shikimate binding site. Residue Gly250 participates in NADP(+) binding.

This sequence belongs to the shikimate dehydrogenase family. In terms of assembly, homodimer.

The enzyme catalyses shikimate + NADP(+) = 3-dehydroshikimate + NADPH + H(+). It participates in metabolic intermediate biosynthesis; chorismate biosynthesis; chorismate from D-erythrose 4-phosphate and phosphoenolpyruvate: step 4/7. Involved in the biosynthesis of the chorismate, which leads to the biosynthesis of aromatic amino acids. Catalyzes the reversible NADPH linked reduction of 3-dehydroshikimate (DHSA) to yield shikimate (SA). This is Shikimate dehydrogenase (NADP(+)) from Streptococcus gordonii (strain Challis / ATCC 35105 / BCRC 15272 / CH1 / DL1 / V288).